The sequence spans 387 residues: Gamma-butyrobetaine dioxygenase (387 aa).

Positions 38, 40, 43, and 82 each coordinate Zn(2+). Positions 202, 204, and 347 each coordinate Fe cation. A Phosphoserine modification is found at Ser-351.

Belongs to the gamma-BBH/TMLD family. Requires Fe(2+) as cofactor. L-ascorbate is required as a cofactor. Expressed in the liver and in some extend in the testis and the epididymis.

The protein resides in the cytoplasm. The enzyme catalyses 4-(trimethylamino)butanoate + 2-oxoglutarate + O2 = carnitine + succinate + CO2. Its pathway is amine and polyamine biosynthesis; carnitine biosynthesis. Functionally, catalyzes the formation of L-carnitine from gamma-butyrobetaine. This chain is Gamma-butyrobetaine dioxygenase (Bbox1), found in Rattus norvegicus (Rat).